The primary structure comprises 420 residues: 4-hydroxy-3-methylbut-2-en-1-yl diphosphate synthase (flavodoxin) (420 aa).

[4Fe-4S] cluster contacts are provided by cysteine 307, cysteine 310, cysteine 353, and glutamate 360.

Belongs to the IspG family. It depends on [4Fe-4S] cluster as a cofactor.

The catalysed reaction is (2E)-4-hydroxy-3-methylbut-2-enyl diphosphate + oxidized [flavodoxin] + H2O + 2 H(+) = 2-C-methyl-D-erythritol 2,4-cyclic diphosphate + reduced [flavodoxin]. The protein operates within isoprenoid biosynthesis; isopentenyl diphosphate biosynthesis via DXP pathway; isopentenyl diphosphate from 1-deoxy-D-xylulose 5-phosphate: step 5/6. Functionally, converts 2C-methyl-D-erythritol 2,4-cyclodiphosphate (ME-2,4cPP) into 1-hydroxy-2-methyl-2-(E)-butenyl 4-diphosphate. The sequence is that of 4-hydroxy-3-methylbut-2-en-1-yl diphosphate synthase (flavodoxin) from Brucella melitensis biotype 2 (strain ATCC 23457).